A 501-amino-acid chain; its full sequence is Glycerol kinase (501 aa).

Threonine 12 serves as a coordination point for ADP. ATP contacts are provided by threonine 12, threonine 13, and serine 14. Sn-glycerol 3-phosphate is bound at residue threonine 12. Arginine 16 serves as a coordination point for ADP. 4 residues coordinate sn-glycerol 3-phosphate: arginine 82, glutamate 83, tyrosine 134, and aspartate 244. Positions 82, 83, 134, 244, and 245 each coordinate glycerol. ADP-binding residues include threonine 266 and glycine 310. Residues threonine 266, glycine 310, glutamine 314, and glycine 411 each coordinate ATP. Residues glycine 411 and asparagine 415 each contribute to the ADP site.

It belongs to the FGGY kinase family.

It catalyses the reaction glycerol + ATP = sn-glycerol 3-phosphate + ADP + H(+). Its pathway is polyol metabolism; glycerol degradation via glycerol kinase pathway; sn-glycerol 3-phosphate from glycerol: step 1/1. With respect to regulation, inhibited by fructose 1,6-bisphosphate (FBP). Key enzyme in the regulation of glycerol uptake and metabolism. Catalyzes the phosphorylation of glycerol to yield sn-glycerol 3-phosphate. This chain is Glycerol kinase, found in Methylorubrum populi (strain ATCC BAA-705 / NCIMB 13946 / BJ001) (Methylobacterium populi).